The sequence spans 248 residues: ATP synthase subunit a, chloroplastic (248 aa).

Transmembrane regions (helical) follow at residues 39 to 59 (QVLITSWVVIAILLGSSILAV), 96 to 116 (VPFIGTLFLFIFVSNWSGALF), 135 to 155 (INTTVALALLTSVAYFYAGLT), 200 to 220 (LVVVVLLSLVPLVVPIPVMFL), and 221 to 241 (GLFTSGIQALIFATLAAAYIG).

Belongs to the ATPase A chain family. F-type ATPases have 2 components, CF(1) - the catalytic core - and CF(0) - the membrane proton channel. CF(1) has five subunits: alpha(3), beta(3), gamma(1), delta(1), epsilon(1). CF(0) has four main subunits: a, b, b' and c.

It localises to the plastid. It is found in the chloroplast thylakoid membrane. Key component of the proton channel; it plays a direct role in the translocation of protons across the membrane. This Pelargonium hortorum (Common geranium) protein is ATP synthase subunit a, chloroplastic.